The sequence spans 548 residues: Lysine--tRNA ligase (548 aa).

The 'HIGH' region motif lies at 43-51 (PSGVPHLGN). The short motif at 308–312 (PFSSS) is the 'KMSKS' region element.

It belongs to the class-I aminoacyl-tRNA synthetase family.

It is found in the cytoplasm. The catalysed reaction is tRNA(Lys) + L-lysine + ATP = L-lysyl-tRNA(Lys) + AMP + diphosphate. This chain is Lysine--tRNA ligase, found in Halobacterium salinarum (strain ATCC 700922 / JCM 11081 / NRC-1) (Halobacterium halobium).